Consider the following 454-residue polypeptide: Pyrimidine/purine nucleotide 5'-monophosphate nucleosidase (454 aa).

It belongs to the LOG family.

The enzyme catalyses a pyrimidine ribonucleoside 5'-phosphate + H2O = a pyrimidine nucleobase + D-ribose 5-phosphate. The catalysed reaction is AMP + H2O = adenine + D-ribose 5-phosphate. It catalyses the reaction GMP + H2O = guanine + D-ribose 5-phosphate. It carries out the reaction CMP + H2O = cytosine + D-ribose 5-phosphate. The enzyme catalyses IMP + H2O = hypoxanthine + D-ribose 5-phosphate. The catalysed reaction is UMP + H2O = D-ribose 5-phosphate + uracil. It catalyses the reaction dTMP + H2O = 2-deoxy-D-ribose 5-phosphate + thymine. Functionally, catalyzes the hydrolysis of the N-glycosidic bond of diverse pyrimidine and purine nucleotide 5'-monophosphates, to form ribose 5-phosphate and the corresponding free base. Can use AMP, GMP, IMP, CMP, dTMP and UMP as substrates. Cannot catalyze the reverse reactions. May contribute to nucleoside pool homeostasis by degrading excess nucleotides and feeding back the ribose moiety to catabolism. This is Pyrimidine/purine nucleotide 5'-monophosphate nucleosidase from Escherichia coli O157:H7.